Reading from the N-terminus, the 92-residue chain is Small ribosomal subunit protein uS19c (92 aa).

It belongs to the universal ribosomal protein uS19 family.

The protein resides in the plastid. The protein localises to the chloroplast. Protein S19 forms a complex with S13 that binds strongly to the 16S ribosomal RNA. This chain is Small ribosomal subunit protein uS19c, found in Illicium oligandrum (Star anise).